The sequence spans 299 residues: Bifunctional protein FolD (299 aa).

NADP(+)-binding positions include 168 to 170, S193, and I234; that span reads GRS.

The protein belongs to the tetrahydrofolate dehydrogenase/cyclohydrolase family. Homodimer.

It catalyses the reaction (6R)-5,10-methylene-5,6,7,8-tetrahydrofolate + NADP(+) = (6R)-5,10-methenyltetrahydrofolate + NADPH. The catalysed reaction is (6R)-5,10-methenyltetrahydrofolate + H2O = (6R)-10-formyltetrahydrofolate + H(+). It functions in the pathway one-carbon metabolism; tetrahydrofolate interconversion. Functionally, catalyzes the oxidation of 5,10-methylenetetrahydrofolate to 5,10-methenyltetrahydrofolate and then the hydrolysis of 5,10-methenyltetrahydrofolate to 10-formyltetrahydrofolate. This Bartonella henselae (strain ATCC 49882 / DSM 28221 / CCUG 30454 / Houston 1) (Rochalimaea henselae) protein is Bifunctional protein FolD.